Consider the following 337-residue polypeptide: Holliday junction branch migration complex subunit RuvB (337 aa).

The tract at residues 1-179 is large ATPase domain (RuvB-L); that stretch reads MTHQVSVLHQ…FSFTGRMSYY (179 aa). ATP-binding positions include leucine 18, arginine 19, glycine 60, lysine 63, threonine 64, serine 65, 126 to 128, arginine 169, tyrosine 179, and arginine 216; that span reads EDY. Residue threonine 64 coordinates Mg(2+). A small ATPAse domain (RuvB-S) region spans residues 180–250; sequence SDEDLTTILK…VAEKALAMLL (71 aa). Positions 253–337 are head domain (RuvB-H); sequence DWGLNEIDIK…DNLQSLGEEK (85 aa). 2 residues coordinate DNA: lysine 308 and arginine 313.

This sequence belongs to the RuvB family. In terms of assembly, homohexamer. Forms an RuvA(8)-RuvB(12)-Holliday junction (HJ) complex. HJ DNA is sandwiched between 2 RuvA tetramers; dsDNA enters through RuvA and exits via RuvB. An RuvB hexamer assembles on each DNA strand where it exits the tetramer. Each RuvB hexamer is contacted by two RuvA subunits (via domain III) on 2 adjacent RuvB subunits; this complex drives branch migration. In the full resolvosome a probable DNA-RuvA(4)-RuvB(12)-RuvC(2) complex forms which resolves the HJ.

Its subcellular location is the cytoplasm. The enzyme catalyses ATP + H2O = ADP + phosphate + H(+). In terms of biological role, the RuvA-RuvB-RuvC complex processes Holliday junction (HJ) DNA during genetic recombination and DNA repair, while the RuvA-RuvB complex plays an important role in the rescue of blocked DNA replication forks via replication fork reversal (RFR). RuvA specifically binds to HJ cruciform DNA, conferring on it an open structure. The RuvB hexamer acts as an ATP-dependent pump, pulling dsDNA into and through the RuvAB complex. RuvB forms 2 homohexamers on either side of HJ DNA bound by 1 or 2 RuvA tetramers; 4 subunits per hexamer contact DNA at a time. Coordinated motions by a converter formed by DNA-disengaged RuvB subunits stimulates ATP hydrolysis and nucleotide exchange. Immobilization of the converter enables RuvB to convert the ATP-contained energy into a lever motion, pulling 2 nucleotides of DNA out of the RuvA tetramer per ATP hydrolyzed, thus driving DNA branch migration. The RuvB motors rotate together with the DNA substrate, which together with the progressing nucleotide cycle form the mechanistic basis for DNA recombination by continuous HJ branch migration. Branch migration allows RuvC to scan DNA until it finds its consensus sequence, where it cleaves and resolves cruciform DNA. This is Holliday junction branch migration complex subunit RuvB from Chlamydia caviae (strain ATCC VR-813 / DSM 19441 / 03DC25 / GPIC) (Chlamydophila caviae).